Reading from the N-terminus, the 296-residue chain is Acetyl-coenzyme A carboxylase carboxyl transferase subunit beta (296 aa).

Residues 25–294 (LWIKDPSTGE…NSDAPAPPEA (270 aa)) enclose the CoA carboxyltransferase N-terminal domain.

It belongs to the AccD/PCCB family. Acetyl-CoA carboxylase is a heterohexamer composed of biotin carboxyl carrier protein (AccB), biotin carboxylase (AccC) and two subunits each of ACCase subunit alpha (AccA) and ACCase subunit beta (AccD).

The protein resides in the cytoplasm. It catalyses the reaction N(6)-carboxybiotinyl-L-lysyl-[protein] + acetyl-CoA = N(6)-biotinyl-L-lysyl-[protein] + malonyl-CoA. The protein operates within lipid metabolism; malonyl-CoA biosynthesis; malonyl-CoA from acetyl-CoA: step 1/1. Component of the acetyl coenzyme A carboxylase (ACC) complex. Biotin carboxylase (BC) catalyzes the carboxylation of biotin on its carrier protein (BCCP) and then the CO(2) group is transferred by the transcarboxylase to acetyl-CoA to form malonyl-CoA. This Brucella ovis (strain ATCC 25840 / 63/290 / NCTC 10512) protein is Acetyl-coenzyme A carboxylase carboxyl transferase subunit beta.